A 289-amino-acid chain; its full sequence is Acetyl-coenzyme A carboxylase carboxyl transferase subunit beta (289 aa).

Positions 28-289 constitute a CoA carboxyltransferase N-terminal domain; it reads VMTKCPKCKK…QGGEMAVWQS (262 aa). Cys32, Cys35, Cys51, and Cys54 together coordinate Zn(2+). The C4-type zinc finger occupies 32-54; that stretch reads CPKCKKIMYTKEVLKNLKVCVNC.

This sequence belongs to the AccD/PCCB family. Acetyl-CoA carboxylase is a heterohexamer composed of biotin carboxyl carrier protein (AccB), biotin carboxylase (AccC) and two subunits each of ACCase subunit alpha (AccA) and ACCase subunit beta (AccD). Zn(2+) is required as a cofactor.

The protein resides in the cytoplasm. The enzyme catalyses N(6)-carboxybiotinyl-L-lysyl-[protein] + acetyl-CoA = N(6)-biotinyl-L-lysyl-[protein] + malonyl-CoA. The protein operates within lipid metabolism; malonyl-CoA biosynthesis; malonyl-CoA from acetyl-CoA: step 1/1. Functionally, component of the acetyl coenzyme A carboxylase (ACC) complex. Biotin carboxylase (BC) catalyzes the carboxylation of biotin on its carrier protein (BCCP) and then the CO(2) group is transferred by the transcarboxylase to acetyl-CoA to form malonyl-CoA. In Bacillus anthracis (strain A0248), this protein is Acetyl-coenzyme A carboxylase carboxyl transferase subunit beta.